The primary structure comprises 125 residues: Glycine cleavage system H protein (125 aa).

A Lipoyl-binding domain is found at 19 to 101; it reads VAVVGISDYA…EGKGWFMKLK (83 aa). Lysine 60 bears the N6-lipoyllysine mark.

Belongs to the GcvH family. In terms of assembly, the glycine cleavage system is composed of four proteins: P, T, L and H. (R)-lipoate is required as a cofactor.

Its function is as follows. The glycine cleavage system catalyzes the degradation of glycine. The H protein shuttles the methylamine group of glycine from the P protein to the T protein. The chain is Glycine cleavage system H protein from Xanthobacter autotrophicus (strain ATCC BAA-1158 / Py2).